Here is a 417-residue protein sequence, read N- to C-terminus: D-amino acid dehydrogenase (417 aa).

Val-3 to Trp-17 contacts FAD.

The protein belongs to the DadA oxidoreductase family. It depends on FAD as a cofactor.

It catalyses the reaction a D-alpha-amino acid + A + H2O = a 2-oxocarboxylate + AH2 + NH4(+). Its pathway is amino-acid degradation; D-alanine degradation; NH(3) and pyruvate from D-alanine: step 1/1. Its function is as follows. Oxidative deamination of D-amino acids. The sequence is that of D-amino acid dehydrogenase from Vibrio atlanticus (strain LGP32) (Vibrio splendidus (strain Mel32)).